Here is an 88-residue protein sequence, read N- to C-terminus: Apolipoprotein C-I (88 aa).

Residues 1–26 form the signal peptide; it reads MRLFLSLPVLVVVLAMVLEGPAPTQA.

It belongs to the apolipoprotein C1 family.

The protein localises to the secreted. Functionally, inhibitor of lipoprotein binding to the low density lipoprotein (LDL) receptor, LDL receptor-related protein, and very low density lipoprotein (VLDL) receptor. Associates with high density lipoproteins (HDL) and the triacylglycerol-rich lipoproteins in the plasma and makes up about 10% of the protein of the VLDL and 2% of that of HDL. Appears to interfere directly with fatty acid uptake and is also the major plasma inhibitor of cholesteryl ester transfer protein (CETP). Binds free fatty acids and reduces their intracellular esterification. Modulates the interaction of APOE with beta-migrating VLDL and inhibits binding of beta-VLDL to the LDL receptor-related protein. This chain is Apolipoprotein C-I (APOC1), found in Mirounga angustirostris (Northern elephant seal).